We begin with the raw amino-acid sequence, 268 residues long: Undecaprenyl-diphosphatase (268 aa).

7 helical membrane passes run 47–67 (FTVL…FAKL), 83–103 (FVIG…IAGK), 109–129 (LFNP…LMWV), 144–164 (FPLP…IPGV), 184–204 (AAEF…AYDF), 218–238 (TVAI…KAFL), and 246–266 (FTFF…ALAL).

Belongs to the UppP family.

It is found in the cell inner membrane. The catalysed reaction is di-trans,octa-cis-undecaprenyl diphosphate + H2O = di-trans,octa-cis-undecaprenyl phosphate + phosphate + H(+). Its function is as follows. Catalyzes the dephosphorylation of undecaprenyl diphosphate (UPP). Confers resistance to bacitracin. The sequence is that of Undecaprenyl-diphosphatase from Nitrobacter winogradskyi (strain ATCC 25391 / DSM 10237 / CIP 104748 / NCIMB 11846 / Nb-255).